The chain runs to 101 residues: Small ribosomal subunit protein uS14 (101 aa).

Belongs to the universal ribosomal protein uS14 family. As to quaternary structure, part of the 30S ribosomal subunit. Contacts proteins S3 and S10.

In terms of biological role, binds 16S rRNA, required for the assembly of 30S particles and may also be responsible for determining the conformation of the 16S rRNA at the A site. The protein is Small ribosomal subunit protein uS14 of Sphingopyxis alaskensis (strain DSM 13593 / LMG 18877 / RB2256) (Sphingomonas alaskensis).